The following is a 167-amino-acid chain: Lipoprotein signal peptidase (167 aa).

2 helical membrane-spanning segments follow: residues 56 to 76 (FAPP…VLVF) and 84 to 104 (TPIF…NMID). Active-site residues include Asp-113 and Asp-139. A helical transmembrane segment spans residues 132–152 (WPIFNVADSAITIGACMLVLF).

The protein belongs to the peptidase A8 family.

It localises to the cell inner membrane. The catalysed reaction is Release of signal peptides from bacterial membrane prolipoproteins. Hydrolyzes -Xaa-Yaa-Zaa-|-(S,diacylglyceryl)Cys-, in which Xaa is hydrophobic (preferably Leu), and Yaa (Ala or Ser) and Zaa (Gly or Ala) have small, neutral side chains.. The protein operates within protein modification; lipoprotein biosynthesis (signal peptide cleavage). In terms of biological role, this protein specifically catalyzes the removal of signal peptides from prolipoproteins. The sequence is that of Lipoprotein signal peptidase from Chlorobium luteolum (strain DSM 273 / BCRC 81028 / 2530) (Pelodictyon luteolum).